A 353-amino-acid chain; its full sequence is Tetrahedral aminopeptidase (353 aa).

Zn(2+)-binding residues include His68 and Asp182. Glu212 serves as the catalytic Proton acceptor. Residues Glu213, Asp235, and His323 each contribute to the Zn(2+) site.

Belongs to the peptidase M42 family. Homododecamer. The assembly of six dimers results in a tetrahedral-shaped structure; all 12 active sites are located on the inside of the tetrahedron. Substrate access is granted by four pores with a maximal diameter of 18 Angstroms, allowing only small peptides and unfolded proteins access to the active site. Beside the four entry ports, TET contains 12 small product release openings, which are large enough to allow passage of only single amino acid residues. Requires Zn(2+) as cofactor. The cofactor is Co(2+).

Its activity is regulated as follows. Inhibited by EDTA and bestatin in vitro. Is insensitive to papain, antipain, chymostatin, leupeptin, pepstatin and aprotinin. Functions as an aminopeptidase, with a clear preference for leucine as the N-terminal amino acid. However, can also cleave moderately long polypeptide substrates of various compositions in a fairly unspecific manner. Has neither carboxypeptidase nor endoproteolytic activities, and it is devoid of N-terminal deblocking activity. Is involved in protein degradation, performing degradation of oligopeptides produced by the proteasome into single amino acids. The chain is Tetrahedral aminopeptidase (frvX) from Pyrococcus horikoshii (strain ATCC 700860 / DSM 12428 / JCM 9974 / NBRC 100139 / OT-3).